Reading from the N-terminus, the 218-residue chain is Small ribosomal subunit protein uS3 (218 aa).

The 69-residue stretch at 38–106 folds into the KH type-2 domain; that stretch reads IRTFLKKKLY…KLVVDIKEVK (69 aa).

This sequence belongs to the universal ribosomal protein uS3 family. Part of the 30S ribosomal subunit. Forms a tight complex with proteins S10 and S14.

In terms of biological role, binds the lower part of the 30S subunit head. Binds mRNA in the 70S ribosome, positioning it for translation. The chain is Small ribosomal subunit protein uS3 from Agathobacter rectalis (strain ATCC 33656 / DSM 3377 / JCM 17463 / KCTC 5835 / VPI 0990) (Eubacterium rectale).